A 327-amino-acid chain; its full sequence is Probable pectinesterase A (327 aa).

Residues 1-19 (MHTPYLLGALAALAATAVG) form the signal peptide. N-linked (GlcNAc...) asparagine glycosylation is present at N84. Residue Q145 coordinates substrate. D168 functions as the Proton donor in the catalytic mechanism. The active-site Nucleophile is the D189. Residues R249 and W251 each contribute to the substrate site. An N-linked (GlcNAc...) asparagine glycan is attached at N288.

The protein belongs to the pectinesterase family.

It localises to the secreted. It catalyses the reaction [(1-&gt;4)-alpha-D-galacturonosyl methyl ester](n) + n H2O = [(1-&gt;4)-alpha-D-galacturonosyl](n) + n methanol + n H(+). It functions in the pathway glycan metabolism; pectin degradation; 2-dehydro-3-deoxy-D-gluconate from pectin: step 1/5. Involved in maceration and soft-rotting of plant tissue. This chain is Probable pectinesterase A (pmeA), found in Aspergillus niger (strain ATCC MYA-4892 / CBS 513.88 / FGSC A1513).